A 370-amino-acid chain; its full sequence is Peptidyl-prolyl cis-trans isomerase D (370 aa).

Positions 11–176 (FFDISADGKP…EDWIISDCGE (166 aa)) constitute a PPIase cyclophilin-type domain. 3 TPR repeats span residues 218 to 251 (VTTL…LNDY), 269 to 302 (LSCY…EAID), and 307 to 340 (TKAL…SPED).

The protein belongs to the cyclophilin-type PPIase family. PPIase D subfamily.

It localises to the cytoplasm. The catalysed reaction is [protein]-peptidylproline (omega=180) = [protein]-peptidylproline (omega=0). Its function is as follows. PPIases accelerate the folding of proteins. It catalyzes the cis-trans isomerization of proline imidic peptide bonds in oligopeptides. The chain is Peptidyl-prolyl cis-trans isomerase D (CPR6) from Debaryomyces hansenii (strain ATCC 36239 / CBS 767 / BCRC 21394 / JCM 1990 / NBRC 0083 / IGC 2968) (Yeast).